The following is a 210-amino-acid chain: Actin-related protein 3C (210 aa).

Positions 1 to 21 (MFESFNVPGLYIAVQAVLALA) are cleaved as a signal peptide.

This sequence belongs to the actin family. In terms of tissue distribution, expressed in kidney, stomach, spleen, bone marrow, uterus, testis, placenta, skeletal muscle, mammary gland, lung, fetal liver, and fetal kidney, but not detected in small intestine, brain, and thymus. Expressed in low-metastatic lung adenocarcinoma cells but not in high-metastatic ones.

May play a role in the suppression of metastatic potential in lung adenoma carcinoma cells. The polypeptide is Actin-related protein 3C (ACTR3C) (Homo sapiens (Human)).